The following is a 174-amino-acid chain: Large ribosomal subunit protein uL10 (174 aa).

This sequence belongs to the universal ribosomal protein uL10 family. Part of the ribosomal stalk of the 50S ribosomal subunit. The N-terminus interacts with L11 and the large rRNA to form the base of the stalk. The C-terminus forms an elongated spine to which L12 dimers bind in a sequential fashion forming a multimeric L10(L12)X complex.

Its function is as follows. Forms part of the ribosomal stalk, playing a central role in the interaction of the ribosome with GTP-bound translation factors. The protein is Large ribosomal subunit protein uL10 of Desulfovibrio desulfuricans (strain ATCC 27774 / DSM 6949 / MB).